Reading from the N-terminus, the 194-residue chain is Small ribosomal subunit protein uS4c (194 aa).

The S4 RNA-binding domain maps to 82–143; sequence MRLDNILFRL…KQRSKALIQN (62 aa).

The protein belongs to the universal ribosomal protein uS4 family. Part of the 30S ribosomal subunit. Contacts protein S5. The interaction surface between S4 and S5 is involved in control of translational fidelity.

Its subcellular location is the plastid. The protein resides in the chloroplast. In terms of biological role, one of the primary rRNA binding proteins, it binds directly to 16S rRNA where it nucleates assembly of the body of the 30S subunit. Functionally, with S5 and S12 plays an important role in translational accuracy. The sequence is that of Small ribosomal subunit protein uS4c (rps4) from Sisyrinchium striatum (Satin flower).